The following is a 101-amino-acid chain: Iron-sulfur cluster assembly protein CyaY (101 aa).

It belongs to the frataxin family.

Its function is as follows. Involved in iron-sulfur (Fe-S) cluster assembly. May act as a regulator of Fe-S biogenesis. This is Iron-sulfur cluster assembly protein CyaY from Haemophilus influenzae (strain PittEE).